We begin with the raw amino-acid sequence, 389 residues long: Sterol methyltransferase-like 2 (389 aa).

The helical transmembrane segment at 25-45 threads the bilayer; that stretch reads LSWKGAVGLVAATGIGYVLII.

The protein belongs to the class I-like SAM-binding methyltransferase superfamily. Erg6/SMT family.

It localises to the microsome membrane. In terms of biological role, unable to convert squalene, botryococcene, cycloartenol, zymosterol or lanosterol to mono-, di-, tri- or tetramethylated derivatives. The protein is Sterol methyltransferase-like 2 (SMT-2) of Botryococcus braunii (Green alga).